The sequence spans 447 residues: Guanine nucleotide-binding protein alpha-1 subunit (447 aa).

The N-myristoyl glycine moiety is linked to residue G2. C3 carries S-palmitoyl cysteine lipidation. Residues 40-447 (NEVKLLLLGA…QQNLKKSGIL (408 aa)) enclose the G-alpha domain. The G1 motif stretch occupies residues 43-56 (KLLLLGAGESGKST). Positions 51, 52, 53, 54, 55, 56, 269, 275, 297, 363, 364, 366, and 419 each coordinate GTP. Mg(2+) is bound at residue S55. A G2 motif region spans residues 267–275 (DILKGRIKT). T275 provides a ligand contact to Mg(2+). Positions 290-299 (FKVYDAGGQR) are G3 motif. The tract at residues 359 to 366 (ILFLNKVD) is G4 motif. The tract at residues 417–422 (TCATDT) is G5 motif.

It belongs to the G-alpha family. G proteins are composed of 3 units; alpha, beta and gamma. The alpha chain contains the guanine nucleotide binding site. Requires Mg(2+) as cofactor.

Functionally, guanine nucleotide-binding proteins (G proteins) are involved as modulators or transducers in various transmembrane signaling systems. This protein is involved in the mating response pathway. The sequence is that of Guanine nucleotide-binding protein alpha-1 subunit (GPA1) from Kluyveromyces lactis (strain ATCC 8585 / CBS 2359 / DSM 70799 / NBRC 1267 / NRRL Y-1140 / WM37) (Yeast).